Here is a 303-residue protein sequence, read N- to C-terminus: Tyrosine recombinase XerC (303 aa).

A Core-binding (CB) domain is found at 1 to 85 (MRADLDAFLE…ATRGLYQYLL (85 aa)). The 180-residue stretch at 106–285 (KLPRTLDADR…DFQHLASVYD (180 aa)) folds into the Tyr recombinase domain. Active-site residues include arginine 146, lysine 170, histidine 237, arginine 240, and histidine 263. Residue tyrosine 272 is the O-(3'-phospho-DNA)-tyrosine intermediate of the active site.

Belongs to the 'phage' integrase family. XerC subfamily. As to quaternary structure, forms a cyclic heterotetrameric complex composed of two molecules of XerC and two molecules of XerD.

It localises to the cytoplasm. In terms of biological role, site-specific tyrosine recombinase, which acts by catalyzing the cutting and rejoining of the recombining DNA molecules. The XerC-XerD complex is essential to convert dimers of the bacterial chromosome into monomers to permit their segregation at cell division. It also contributes to the segregational stability of plasmids. The chain is Tyrosine recombinase XerC from Pseudomonas aeruginosa (strain LESB58).